Here is a 271-residue protein sequence, read N- to C-terminus: 4-diphosphocytidyl-2-C-methyl-D-erythritol kinase (271 aa).

Lysine 17 is an active-site residue. 97–107 (PVGSGLGGGSS) is a binding site for ATP. The active site involves aspartate 137.

Belongs to the GHMP kinase family. IspE subfamily.

The catalysed reaction is 4-CDP-2-C-methyl-D-erythritol + ATP = 4-CDP-2-C-methyl-D-erythritol 2-phosphate + ADP + H(+). The protein operates within isoprenoid biosynthesis; isopentenyl diphosphate biosynthesis via DXP pathway; isopentenyl diphosphate from 1-deoxy-D-xylulose 5-phosphate: step 3/6. Catalyzes the phosphorylation of the position 2 hydroxy group of 4-diphosphocytidyl-2C-methyl-D-erythritol. This chain is 4-diphosphocytidyl-2-C-methyl-D-erythritol kinase, found in Thermotoga petrophila (strain ATCC BAA-488 / DSM 13995 / JCM 10881 / RKU-1).